Here is a 433-residue protein sequence, read N- to C-terminus: ATP-dependent RNA helicase SUB2 (433 aa).

The span at 1–17 shows a compositional bias: acidic residues; that stretch reads MSAENQEELLDYSDSEE. Residues 1 to 39 are disordered; sequence MSAENQEELLDYSDSEEIAVPTTTQAGEGESANDKEADK. The short motif at 49-77 is the Q motif element; it reads TGFRDFLLKPELLRAIGDCGFEHPSEVQQ. The Helicase ATP-binding domain maps to 80-255; the sequence is IPQSILGTDV…KKFMQNPLEI (176 aa). 93–100 is a binding site for ATP; it reads AKSGLGKT. Residues 202 to 205 carry the DEAD box motif; it reads DECD. One can recognise a Helicase C-terminal domain in the interval 267 to 428; the sequence is GLQQYYIKLE…EFPEEGVDPS (162 aa).

It belongs to the DEAD box helicase family. DECD subfamily.

The protein localises to the nucleus. The enzyme catalyses ATP + H2O = ADP + phosphate + H(+). Its function is as follows. ATP-binding RNA helicase involved in transcription elongation and required for the export of mRNA out of the nucleus. SUB2 also plays a role in pre-mRNA splicing and spliceosome assembly. May be involved in rDNA and telomeric silencing, and maintenance of genome integrity. This Lodderomyces elongisporus (strain ATCC 11503 / CBS 2605 / JCM 1781 / NBRC 1676 / NRRL YB-4239) (Yeast) protein is ATP-dependent RNA helicase SUB2 (SUB2).